The primary structure comprises 344 residues: Heat-inducible transcription repressor HrcA (344 aa).

This sequence belongs to the HrcA family.

In terms of biological role, negative regulator of class I heat shock genes (grpE-dnaK-dnaJ and groELS operons). Prevents heat-shock induction of these operons. The sequence is that of Heat-inducible transcription repressor HrcA from Moorella thermoacetica (strain ATCC 39073 / JCM 9320).